A 1154-amino-acid polypeptide reads, in one-letter code: Serine-aspartate repeat-containing protein E (1154 aa).

The first 52 residues, 1–52 (MINRDNKKAITKKGMISNRLNKFSIRKYTVGTASILVGTTLIFGLGNQEAKA), serve as a signal peptide directing secretion. The YSIRK-G/S signaling motif signature appears at 23-34 (FSIRKYTVGTAS). Positions 53-606 (AENTSTENAK…GDGTVKPEEK (554 aa)) are ligand binding A region. The disordered stretch occupies residues 54–230 (ENTSTENAKQ…SKEELKNNPE (177 aa)). The segment covering 61–75 (AKQDDATTSDNKEVV) has biased composition (basic and acidic residues). Residues 77–90 (ETENNSTTENNSTN) show a composition bias toward low complexity. The span at 92–108 (IKKETNTDSQPEAKKES) shows a compositional bias: basic and acidic residues. Positions 118–129 (NNVTATTETKPQ) are enriched in polar residues. A compositionally biased stretch (basic and acidic residues) spans 130-145 (NIEKENVKPSTDKTAT). The span at 166–178 (TTKPSTSEPSTSE) shows a compositional bias: low complexity. Residues 179–212 (IQTKPTTPQESTNIENSQPQPTPSKVDNQVTDAT) are compositionally biased toward polar residues. Residues 221–230 (SKEELKNNPE) show a composition bias toward basic and acidic residues. CNA-B domains lie at 607-719 (LYKI…YKEP), 720-829 (KYNL…YKTP), and 830-940 (KYSL…EEDT). Positions 904 to 1129 (VTNTTEDDKD…TGSENNGSNN (226 aa)) are disordered. Composition is skewed to acidic residues over residues 908–918 (TEDDKDADGGE) and 935–1093 (YFEE…DSDS). The short motif at 1117–1121 (LPETG) is the LPXTG sorting signal element. Residue Thr1120 is modified to Pentaglycyl murein peptidoglycan amidated threonine. Residues 1121–1154 (GSENNGSNNATLFGGLFAALGSLLLFGRRKKQNK) constitute a propeptide, removed by sortase.

The protein belongs to the serine-aspartate repeat-containing protein (SDr) family. In terms of assembly, interacts with host complement factor H/CFAH (via C-terminus). Interacts with host complement regulator C4BPA.

The protein localises to the secreted. Its subcellular location is the cell wall. Cell surface-associated calcium-binding protein which plays an important role in adhesion and pathogenesis. Contributes to the resistance to killing by innate immune components in blood and thus attenuates bacterial clearance by interacting with host complement factor H/CFAH and modulating its activity. Also inhibits bacterial opsonization and killing by interacting with host complement regulator C4BPA and thus inhibiting classical complement pathway activation. The chain is Serine-aspartate repeat-containing protein E (sdrE) from Staphylococcus aureus (strain USA300).